Reading from the N-terminus, the 136-residue chain is Protein LpdD (136 aa).

The protein belongs to the CinA family.

Probably involved in tannin degradation, however the precise biochemical function in metabolism of gallate is unknown. The chain is Protein LpdD from Lactiplantibacillus plantarum (strain ATCC BAA-793 / NCIMB 8826 / WCFS1) (Lactobacillus plantarum).